We begin with the raw amino-acid sequence, 795 residues long: Cyclin-dependent kinase 11B (795 aa).

Positions 17–60 (LQEKKRRKEQEEKAEIKRLKNSDDRDSKRDSLEEGELRDHRMEI) are enriched in basic and acidic residues. The interval 17-412 (LQEKKRRKEQ…EGDYVPDSPA (396 aa)) is disordered. Phosphoserine occurs at positions 47 and 72. A compositionally biased stretch (basic residues) spans 95-113 (EKAHHRKDEKRKEKRRHRS). Composition is skewed to basic and acidic residues over residues 114–131 (HSAE…EREH), 138–227 (REEQ…DKVK), 238–253 (PPRE…KPGE), and 264–276 (QLKE…RDLL). The residue at position 115 (Ser-115) is a Phosphoserine. Phosphoserine is present on Ser-283. Positions 291–302 (SAESSSAESGSG) are enriched in low complexity. Acidic residues-rich tracts occupy residues 303–364 (SEEE…EERE) and 383–392 (ESEEAEEEVG). A Protein kinase domain is found at 438–723 (FQCLNRIEEG…AEDGLKHEYF (286 aa)). ATP-binding positions include 444 to 452 (IEEGTYGVV) and Lys-467. Ser-482 carries the post-translational modification Phosphoserine; by CDK7. The residue at position 488 (Thr-488) is a Phosphothreonine; by CDK7. Asp-562 (proton acceptor) is an active-site residue. Phosphoserine is present on Ser-589. A Phosphotyrosine modification is found at Tyr-594. The residue at position 595 (Thr-595) is a Phosphothreonine. Lys-641 is covalently cross-linked (Glycyl lysine isopeptide (Lys-Gly) (interchain with G-Cter in SUMO2)). A disordered region spans residues 733–795 (SMFPTWPAKS…AAGPGFSLKF (63 aa)). Thr-751 carries the post-translational modification Phosphothreonine. Ser-752 carries the phosphoserine modification.

It belongs to the protein kinase superfamily. CMGC Ser/Thr protein kinase family. CDC2/CDKX subfamily. In terms of assembly, cleaved isoform SV9 (p110C) binds to the serine/threonine kinase PAK1 and RANBP9. p110C interacts with RNPS1. Isoform 7, but not isoform SV9, nor its cleavage product p110C, interacts with CCND3. Interacts with CCNL1 and CCNL2. Forms complexes with pre-mRNA-splicing factors, including at least SRSF1, SRSF2 and SRSF7/SLU7. Interacts with isoform 5 of MYO18A. As to quaternary structure, (Microbial infection) Interacts with human herpes virus 1 (HHV-1) transcriptional regulator ICP22. Requires Mg(2+) as cofactor. Post-translationally, during FAS- or TNF-induced apoptosis, isoform SV9 is cleaved by caspases to produce p110C, a fragment that contains the C-terminal kinase domain. Phosphorylation at Ser-115 creates a binding site for 14-3-3 proteins. p110C can be autophosphorylated. As to expression, expressed ubiquitously. Some evidence of isoform-specific tissue distribution.

The protein resides in the cytoplasm. The protein localises to the nucleus. The enzyme catalyses L-seryl-[protein] + ATP = O-phospho-L-seryl-[protein] + ADP + H(+). It carries out the reaction L-threonyl-[protein] + ATP = O-phospho-L-threonyl-[protein] + ADP + H(+). Its activity is regulated as follows. Phosphorylation at Thr-448 or Tyr-449 inactivates the enzyme, while phosphorylation at Thr-595 activates it. Plays multiple roles in cell cycle progression, cytokinesis and apoptosis. Involved in pre-mRNA splicing in a kinase activity-dependent manner. Isoform 7 may act as a negative regulator of normal cell cycle progression. The sequence is that of Cyclin-dependent kinase 11B (CDK11B) from Homo sapiens (Human).